Consider the following 387-residue polypeptide: Protein SGT1 homolog (387 aa).

TPR repeat units follow at residues 1–34 (MEQL…SNNA), 36–67 (AFFK…DSNN), and 68–101 (SKYY…DSEN). 2 disordered regions span residues 110 to 193 (KSKA…PSSG) and 299 to 323 (SPAV…EEKL). The span at 118–127 (NPTTTTTTTP) shows a compositional bias: low complexity. Positions 128 to 138 (TPTPTPTPAPQ) are enriched in pro residues. Low complexity predominate over residues 139–185 (PVTTTTNPTPIPTTSNTTTTTNNNNNNNNNNNNNNNNNNTTTDSTTT). The 90-residue stretch at 193–282 (GNKVRHEWYQ…SRAIKWDTLE (90 aa)) folds into the CS domain. The SGS domain maps to 301–387 (AVPSPYASKK…KGLEFKQYEK (87 aa)). The segment covering 308 to 323 (SKKDWDKLPNEPEEKL) has biased composition (basic and acidic residues).

It belongs to the SGT1 family.

May play a role in ubiquitination and subsequent proteasomal degradation of target proteins. The chain is Protein SGT1 homolog (sugt1) from Dictyostelium discoideum (Social amoeba).